A 120-amino-acid polypeptide reads, in one-letter code: NAD(P)H-quinone oxidoreductase subunit 3, chloroplastic (120 aa).

3 helical membrane passes run 10–30 (FWLF…ISKI), 64–84 (MFAL…PWAM), and 89–109 (LGIS…IGLI).

Belongs to the complex I subunit 3 family. As to quaternary structure, NDH is composed of at least 16 different subunits, 5 of which are encoded in the nucleus.

The protein resides in the plastid. It is found in the chloroplast thylakoid membrane. It catalyses the reaction a plastoquinone + NADH + (n+1) H(+)(in) = a plastoquinol + NAD(+) + n H(+)(out). The catalysed reaction is a plastoquinone + NADPH + (n+1) H(+)(in) = a plastoquinol + NADP(+) + n H(+)(out). In terms of biological role, NDH shuttles electrons from NAD(P)H:plastoquinone, via FMN and iron-sulfur (Fe-S) centers, to quinones in the photosynthetic chain and possibly in a chloroplast respiratory chain. The immediate electron acceptor for the enzyme in this species is believed to be plastoquinone. Couples the redox reaction to proton translocation, and thus conserves the redox energy in a proton gradient. This Angiopteris evecta (Mule's foot fern) protein is NAD(P)H-quinone oxidoreductase subunit 3, chloroplastic.